Here is a 134-residue protein sequence, read N- to C-terminus: Small ribosomal subunit protein uS12 (134 aa).

Asp-89 is subject to 3-methylthioaspartic acid. Residues 103–134 (DTAGVKDRKQGRSKYGAKRPKPGEAAATGKKK) are disordered. Positions 113-122 (GRSKYGAKRP) are enriched in basic residues.

The protein belongs to the universal ribosomal protein uS12 family. Part of the 30S ribosomal subunit. Contacts proteins S8 and S17. May interact with IF1 in the 30S initiation complex.

Functionally, with S4 and S5 plays an important role in translational accuracy. In terms of biological role, interacts with and stabilizes bases of the 16S rRNA that are involved in tRNA selection in the A site and with the mRNA backbone. Located at the interface of the 30S and 50S subunits, it traverses the body of the 30S subunit contacting proteins on the other side and probably holding the rRNA structure together. The combined cluster of proteins S8, S12 and S17 appears to hold together the shoulder and platform of the 30S subunit. In Thermosynechococcus vestitus (strain NIES-2133 / IAM M-273 / BP-1), this protein is Small ribosomal subunit protein uS12.